A 341-amino-acid polypeptide reads, in one-letter code: Very-long-chain 3-oxoacyl-CoA reductase (341 aa).

Residues 15 to 35 form a helical membrane-spanning segment; that stretch reads VVTAFSVIGIVFTILKFTSFA. NADP(+)-binding residues include Val-61, Asp-115, Asn-142, Lys-177, Tyr-216, Lys-220, Val-249, and Ser-251. Catalysis depends on Tyr-216, which acts as the Proton donor. The active-site Lowers pKa of active site Tyr is Lys-220.

Belongs to the short-chain dehydrogenases/reductases (SDR) family.

The protein resides in the endoplasmic reticulum membrane. It catalyses the reaction a very-long-chain (3R)-3-hydroxyacyl-CoA + NADP(+) = a very-long-chain 3-oxoacyl-CoA + NADPH + H(+). It functions in the pathway lipid metabolism; fatty acid biosynthesis. Functionally, component of the microsomal membrane bound fatty acid elongation system, which produces the 26-carbon very long-chain fatty acids (VLCFA) from palmitate. Catalyzes the reduction of the 3-ketoacyl-CoA intermediate that is formed in each cycle of fatty acid elongation. VLCFAs serve as precursors for ceramide and sphingolipids. In Schizosaccharomyces pombe (strain 972 / ATCC 24843) (Fission yeast), this protein is Very-long-chain 3-oxoacyl-CoA reductase.